A 72-amino-acid chain; its full sequence is Protein kish-A (72 aa).

The signal sequence occupies residues 1–26; sequence MSAIFNFQSLLIVILLLICTCAYLRA. The Extracellular segment spans residues 27 to 53; that stretch reads LVPNLLDKNKTGILGIFWKCARIGERK. An N-linked (GlcNAc...) asparagine glycan is attached at Asn35. The helical transmembrane segment at 54–71 threads the bilayer; it reads SPYVAVCCVVMAFSILFM. Position 72 (Gln72) is a topological domain, cytoplasmic.

The protein belongs to the KISH family.

The protein resides in the golgi apparatus membrane. In terms of biological role, involved in the early part of the secretory pathway. The sequence is that of Protein kish-A (tmem167a) from Xenopus tropicalis (Western clawed frog).